A 137-amino-acid chain; its full sequence is Nucleoside diphosphate kinase (137 aa).

6 residues coordinate ATP: K10, F59, R87, T93, R104, and N114. H117 acts as the Pros-phosphohistidine intermediate in catalysis.

This sequence belongs to the NDK family. As to quaternary structure, homotetramer. Mg(2+) is required as a cofactor.

The protein resides in the cytoplasm. It catalyses the reaction a 2'-deoxyribonucleoside 5'-diphosphate + ATP = a 2'-deoxyribonucleoside 5'-triphosphate + ADP. The enzyme catalyses a ribonucleoside 5'-diphosphate + ATP = a ribonucleoside 5'-triphosphate + ADP. In terms of biological role, major role in the synthesis of nucleoside triphosphates other than ATP. The ATP gamma phosphate is transferred to the NDP beta phosphate via a ping-pong mechanism, using a phosphorylated active-site intermediate. In Streptomyces avermitilis (strain ATCC 31267 / DSM 46492 / JCM 5070 / NBRC 14893 / NCIMB 12804 / NRRL 8165 / MA-4680), this protein is Nucleoside diphosphate kinase.